The primary structure comprises 197 residues: Probable chorismate pyruvate-lyase (197 aa).

3 residues coordinate substrate: Arg77, Leu115, and Glu176.

The protein belongs to the UbiC family.

It localises to the cytoplasm. It carries out the reaction chorismate = 4-hydroxybenzoate + pyruvate. It participates in cofactor biosynthesis; ubiquinone biosynthesis. Its function is as follows. Removes the pyruvyl group from chorismate, with concomitant aromatization of the ring, to provide 4-hydroxybenzoate (4HB) for the ubiquinone pathway. This chain is Probable chorismate pyruvate-lyase, found in Burkholderia ambifaria (strain ATCC BAA-244 / DSM 16087 / CCUG 44356 / LMG 19182 / AMMD) (Burkholderia cepacia (strain AMMD)).